A 95-amino-acid polypeptide reads, in one-letter code: Large ribosomal subunit protein uL23 (95 aa).

Belongs to the universal ribosomal protein uL23 family. Part of the 50S ribosomal subunit. Contacts protein L29, and trigger factor when it is bound to the ribosome.

Its function is as follows. One of the early assembly proteins it binds 23S rRNA. One of the proteins that surrounds the polypeptide exit tunnel on the outside of the ribosome. Forms the main docking site for trigger factor binding to the ribosome. In Bacillus pumilus (strain SAFR-032), this protein is Large ribosomal subunit protein uL23.